The sequence spans 324 residues: Phospho-N-acetylmuramoyl-pentapeptide-transferase (324 aa).

10 helical membrane-spanning segments follow: residues 9–29 (TFAVAFIITVIGVPLFIPFLV), 53–73 (TMGAVVFITAMLISFLVFSFI), 77–97 (VSAATWLLFIALALFGALGFL), 117–137 (FLGQVVISILFYLVYHFNDFA), 147–167 (IEVDLGWFFVIFILFWLVGFS), 176–196 (LDGLVSGLSVIAFSAFGVIAF), 201–221 (MDVAIFCFAIVGGMLGFLLFN), 227–247 (IFMGDTGSLALGGSIAAISIL), 253–273 (LLLLIGIIFVIETASVILQVF), and 304–324 (VLTFWGIGLVGAIISVCVVIF).

Belongs to the glycosyltransferase 4 family. MraY subfamily. Requires Mg(2+) as cofactor.

Its subcellular location is the cell membrane. It carries out the reaction UDP-N-acetyl-alpha-D-muramoyl-L-alanyl-gamma-D-glutamyl-meso-2,6-diaminopimeloyl-D-alanyl-D-alanine + di-trans,octa-cis-undecaprenyl phosphate = di-trans,octa-cis-undecaprenyl diphospho-N-acetyl-alpha-D-muramoyl-L-alanyl-D-glutamyl-meso-2,6-diaminopimeloyl-D-alanyl-D-alanine + UMP. Its pathway is cell wall biogenesis; peptidoglycan biosynthesis. Its function is as follows. Catalyzes the initial step of the lipid cycle reactions in the biosynthesis of the cell wall peptidoglycan: transfers peptidoglycan precursor phospho-MurNAc-pentapeptide from UDP-MurNAc-pentapeptide onto the lipid carrier undecaprenyl phosphate, yielding undecaprenyl-pyrophosphoryl-MurNAc-pentapeptide, known as lipid I. This Listeria monocytogenes serovar 1/2a (strain ATCC BAA-679 / EGD-e) protein is Phospho-N-acetylmuramoyl-pentapeptide-transferase.